We begin with the raw amino-acid sequence, 88 residues long: Small ribosomal subunit protein uS17 (88 aa).

It belongs to the universal ribosomal protein uS17 family. In terms of assembly, part of the 30S ribosomal subunit.

Functionally, one of the primary rRNA binding proteins, it binds specifically to the 5'-end of 16S ribosomal RNA. This is Small ribosomal subunit protein uS17 from Prochlorococcus marinus (strain MIT 9301).